Reading from the N-terminus, the 652-residue chain is Acetyl-coenzyme A synthetase (652 aa).

Residues 193–196 (RRGK) and threonine 312 each bind CoA. Residues 388 to 390 (GEP), 412 to 417 (DTWWQT), aspartate 501, and arginine 516 each bind ATP. Serine 524 is a CoA binding site. Mg(2+) contacts are provided by valine 538, histidine 540, and valine 543. Lysine 611 carries the N6-acetyllysine modification.

It belongs to the ATP-dependent AMP-binding enzyme family. The cofactor is Mg(2+). In terms of processing, acetylated. Deacetylation by the SIR2-homolog deacetylase activates the enzyme.

The catalysed reaction is acetate + ATP + CoA = acetyl-CoA + AMP + diphosphate. In terms of biological role, catalyzes the conversion of acetate into acetyl-CoA (AcCoA), an essential intermediate at the junction of anabolic and catabolic pathways. AcsA undergoes a two-step reaction. In the first half reaction, AcsA combines acetate with ATP to form acetyl-adenylate (AcAMP) intermediate. In the second half reaction, it can then transfer the acetyl group from AcAMP to the sulfhydryl group of CoA, forming the product AcCoA. In Streptomyces avermitilis (strain ATCC 31267 / DSM 46492 / JCM 5070 / NBRC 14893 / NCIMB 12804 / NRRL 8165 / MA-4680), this protein is Acetyl-coenzyme A synthetase.